A 318-amino-acid polypeptide reads, in one-letter code: NAC domain-containing protein 59 (318 aa).

Positions 24-174 (LPPGFRFHPT…ECVISRVFHT (151 aa)) constitute an NAC domain. A DNA-binding region spans residues 121–180 (VGMKKTLVFYKGRAPKGVKTNWVMHEYRLEGKFAIDNLSKTAKNECVISRVFHTRTDGTK).

As to expression, mostly expressed in root cortex, phloem, atrichoblast and quiescent center (QC), and, to a lower extent, in root endodermis, xylem, pericycle, columella and lateral root cap (LRC). Expressed in roots, cotyledons, very young leaves, senescing leaves, mature flowers and pollen.

It is found in the nucleus. Its function is as follows. Transcription activator that binds to DNA in promoters of target genes on a specific bipartite motif 5'-[AG]CGT[AG](4-5n)[AG][CT]ACGCAA-3'. Triggers the expression of senescence-associated genes during age-, salt- and dark-induced senescence through a regulatory network that may involve cross-talk with salt- and H(2)O(2)-dependent signaling pathways. The polypeptide is NAC domain-containing protein 59 (Arabidopsis thaliana (Mouse-ear cress)).